We begin with the raw amino-acid sequence, 467 residues long: Keratin, type 1 cytoskeletal 11 (467 aa).

The head stretch occupies residues 1–100 (MSYSSFSIAQ…GGTDFLLGTS (100 aa)). The span at 12 to 30 (SRVPSLSGTRSSSSYSLKS) shows a compositional bias: low complexity. A disordered region spans residues 12-32 (SRVPSLSGTRSSSSYSLKSDL). Positions 101–137 (GKEAMQNLNDRLADYLARVRSLEDRNRELEQKIREWY) are coil 1A. In terms of domain architecture, IF rod spans 101–413 (GKEAMQNLND…TLLEGDAGRS (313 aa)). A linker 1 region spans residues 138 to 156 (EKQGAGTKRKDFSHYFKII). The segment at 157–248 (ADLQNQINAG…SHDEDMKALR (92 aa)) is coil 1B. Positions 249–268 (SQLGGQVNVEVDAAPAEDLT) are linker 12. The interval 269–416 (KKLEIIRQRY…EGDAGRSHSS (148 aa)) is coil 2. The disordered stretch occupies residues 409–430 (DAGRSHSSSHLSSTVSKDKVPV). The tract at residues 417-463 (SHLSSTVSKDKVPVSSPNVITKVRTIVEEKINGQVISKKEYEGSPDQ) is tail.

It belongs to the intermediate filament family. As to quaternary structure, heterotetramer of two type I and two type II keratins. In terms of tissue distribution, expressed in the outermost cell layers of skin epidermis (at protein level).

The chain is Keratin, type 1 cytoskeletal 11 from Protopterus aethiopicus (Marbled lungfish).